The primary structure comprises 588 residues: Solute carrier family 2, facilitated glucose transporter member 12 (588 aa).

At 1 to 28 (MLAHSTAQDLILQQRSSDDHPQTNPRQT) the chain is on the cytoplasmic side. The chain crosses the membrane as a helical span at residues 29 to 49 (GCGAFIILSSVIAAISGLLVG). Over 50 to 74 (YELGIISGALLQLQSLLELTCQQQE) the chain is Extracellular. A helical membrane pass occupies residues 75–95 (IVVSALLIGALVASLVGGCLI). At 96 to 103 (DLYGRRTT) the chain is on the cytoplasmic side. Residues 104-124 (IIFTSILLVFANLLPVVVVSY) form a helical membrane-spanning segment. The Extracellular portion of the chain corresponds to 125-131 (GSLIAGR). Residues 132 to 152 (IFIGVSISLSAIATCVYIAEL) form a helical membrane-spanning segment. The Cytoplasmic segment spans residues 153–158 (SPQDKR). A helical membrane pass occupies residues 159–179 (GMLVSLNELMIVAGILLAYIC). Topologically, residues 180–191 (NYLFASVNNGWK) are extracellular. Residues 192–212 (YMFGLITPLAALQAVAMFFLP) traverse the membrane as a helical segment. At 213–272 (RSPRFLIMKGYDDAAGKVLQKLRATTDINEELTAIKSSIKAEYQYKFLDLFCSRDNMRAR) the chain is on the cytoplasmic side. Residues 273 to 293 (LLIGLTLSFFVQITGQPNILF) traverse the membrane as a helical segment. Topologically, residues 294–311 (YASTVLKSVGFQSTEAAS) are extracellular. The chain crosses the membrane as a helical span at residues 312 to 332 (LASTGIGVVKVVSTIPAIFLV). The Cytoplasmic segment spans residues 333 to 339 (DKIGSKT). Residues 340-360 (FLCIGSAVMAVSLVSVGLVSL) traverse the membrane as a helical segment. The Extracellular portion of the chain corresponds to 361–459 (QLDVNYNNIC…IPEYMKWLCL (99 aa)). 3 N-linked (GlcNAc...) asparagine glycosylation sites follow: Asn377, Asn395, and Asn419. The helical transmembrane segment at 460–480 (SSLLAFVAAFSIGLGPMAWLV) threads the bilayer. The Cytoplasmic segment spans residues 481–492 (QSEIFPAGIKGR). The chain crosses the membrane as a helical span at residues 493-513 (AFAITSSMNWGMNLLISLTFL). Residues 514–522 (TLTEMIGLP) lie on the Extracellular side of the membrane. Residues 523 to 543 (WMLFGYALMSIASLVFVIMFV) traverse the membrane as a helical segment. The Cytoplasmic portion of the chain corresponds to 544-588 (PNTKGRPLEEISKELANRSYMCNAVCHRRRSKKKLTPVALIQSPA).

It belongs to the major facilitator superfamily. Sugar transporter (TC 2.A.1.1) family. Glucose transporter subfamily.

The protein resides in the cell membrane. It is found in the endomembrane system. Its subcellular location is the cytoplasm. It localises to the perinuclear region. The catalysed reaction is D-glucose(out) = D-glucose(in). In terms of biological role, insulin-regulated facilitative glucose transporter. This Xenopus laevis (African clawed frog) protein is Solute carrier family 2, facilitated glucose transporter member 12.